A 660-amino-acid chain; its full sequence is Solute carrier family 5 member 4B (660 aa).

Residues 1-27 lie on the Cytoplasmic side of the membrane; sequence MASTLSPSITPQTEEPPVVPVRIQNAA. The chain crosses the membrane as a helical span at residues 28-48; it reads DISVIVIYFIVVLAVGLWSMV. Over 49–54 the chain is Extracellular; that stretch reads RSNRGT. The chain crosses the membrane as a helical span at residues 55–75; it reads VGGFFLAGHDMAWWPMGASLF. Topologically, residues 76 to 82 are cytoplasmic; the sequence is ASNIGSN. The chain crosses the membrane as a helical span at residues 83–103; that stretch reads HFVGLAGTGAASGIAIAAVEW. Residues 104 to 105 lie on the Extracellular side of the membrane; the sequence is NA. The chain crosses the membrane as a helical span at residues 106-126; sequence LLMVLVLGWVFLPIYIKAGVL. Topologically, residues 127 to 142 are cytoplasmic; sequence TMPEYLRKRFGGKRLQ. A helical membrane pass occupies residues 143–163; sequence IYLSVLSLFIMVALQTSSIIF. The Extracellular portion of the chain corresponds to 164-166; the sequence is SGA. Residues 167-187 form a helical membrane-spanning segment; the sequence is IFIQLALGLNLYLAVFILLAI. Residues 188 to 208 are Cytoplasmic-facing; that stretch reads TAFYTVAGGLASVIYTDSVQT. Residues 209-229 traverse the membrane as a helical segment; that stretch reads FIMLLGSLILMGFAFAEVGGY. The Extracellular portion of the chain corresponds to 230-277; that stretch reads ESFTEKYMNAIPSVVEGDNLTISPKCYTPQPDSFHVFRDPVTGDIPWP. The chain crosses the membrane as a helical span at residues 278 to 298; that stretch reads GLIFGMTILAIWYWCADQVIV. At 299-313 the chain is on the cytoplasmic side; the sequence is QRCLCGKNMSHVKAA. A helical membrane pass occupies residues 314–334; the sequence is CILCGYLKLLPMFLMVMPGMI. The Extracellular segment spans residues 335–380; the sequence is SRILYTDKVACVVPSECEKQCGTAVGCTNYAYPTLVLELMPDGLRG. The helical transmembrane segment at 381–401 threads the bilayer; that stretch reads LMLSVMLASLMSSLTSIFNSA. At 402 to 423 the chain is on the cytoplasmic side; the sequence is STLFTIDLYTKIRKKASERELM. Residues 424-444 form a helical membrane-spanning segment; that stretch reads IAGRIFGMVLIAVSILWVPLV. Over 445–455 the chain is Extracellular; sequence QVSQNGQLFHY. A helical membrane pass occupies residues 456-476; sequence IGSVSSYLGPPLGAVFMLAIF. Residues 477–484 lie on the Cytoplasmic side of the membrane; that stretch reads FKRVNEQG. A helical transmembrane segment spans residues 485–505; sequence AFWGLMVGLVVGLIRLIAEFV. Topologically, residues 506–526 are extracellular; sequence YGTGSCVAPSNCPKIICGVHY. Residues 527–547 form a helical membrane-spanning segment; the sequence is MYFAIILFFVSIIVILGVSFL. Residues 548 to 639 are Cytoplasmic-facing; that stretch reads TEPIPDVHLY…DTSEKPLWRT (92 aa). The chain crosses the membrane as a helical span at residues 640 to 660; that stretch reads VMNINAVLLLGVAVFVHAYFA.

It belongs to the sodium:solute symporter (SSF) (TC 2.A.21) family. As to expression, expressed in small intestine. Expressed in kidney.

Its subcellular location is the cell membrane. It catalyses the reaction D-glucose(out) + 2 Na(+)(out) = D-glucose(in) + 2 Na(+)(in). Its activity is regulated as follows. Inhibited by phlorizin. Its function is as follows. Low-affinity sodium/D-glucose symporter. Generates D-glucose-induced depolarization in a pH-independent manner. The chain is Solute carrier family 5 member 4B from Mus musculus (Mouse).